The sequence spans 342 residues: Anthranilate phosphoribosyltransferase (342 aa).

5-phospho-alpha-D-ribose 1-diphosphate is bound by residues Gly84, 87–88 (GD), Thr92, 94–97 (NITT), 112–120 (KHGNRSVSS), and Ser124. Gly84 contacts anthranilate. Thr96 serves as a coordination point for Mg(2+). Asn115 is an anthranilate binding site. An anthranilate-binding site is contributed by Arg170. Mg(2+) contacts are provided by Asp228 and Glu229.

Belongs to the anthranilate phosphoribosyltransferase family. In terms of assembly, homodimer. It depends on Mg(2+) as a cofactor.

It catalyses the reaction N-(5-phospho-beta-D-ribosyl)anthranilate + diphosphate = 5-phospho-alpha-D-ribose 1-diphosphate + anthranilate. It functions in the pathway amino-acid biosynthesis; L-tryptophan biosynthesis; L-tryptophan from chorismate: step 2/5. Catalyzes the transfer of the phosphoribosyl group of 5-phosphorylribose-1-pyrophosphate (PRPP) to anthranilate to yield N-(5'-phosphoribosyl)-anthranilate (PRA). The chain is Anthranilate phosphoribosyltransferase from Corynebacterium efficiens (strain DSM 44549 / YS-314 / AJ 12310 / JCM 11189 / NBRC 100395).